Consider the following 73-residue polypeptide: MRRFVFLAFVLVLFVIANLDSSSAQVNFSPDWGQGKRSGSSDTCAVCAQTMAQVYRLLQGLEAKLGQSRNYSR.

The N-terminal stretch at 1-24 (MRRFVFLAFVLVLFVIANLDSSSA) is a signal peptide.

The protein belongs to the scoloptoxin-22 family. In terms of processing, contains 1 disulfide bond. As to expression, expressed by the venom gland.

The protein localises to the secreted. This Cormocephalus westwoodi (Westwood's green centipede) protein is U-scoloptoxin(22)-Cw1a.